Consider the following 324-residue polypeptide: Probable acrylyl-CoA reductase AcuI (324 aa).

NADP(+) contacts are provided by residues Y41, 156-159 (SGGV), 178-180 (SGR), R198, L242, I256, S267, and N313.

The protein belongs to the zinc-containing alcohol dehydrogenase family. Acrylyl-CoA reductase subfamily. Homodimer.

The protein localises to the cytoplasm. It carries out the reaction propanoyl-CoA + NADP(+) = acryloyl-CoA + NADPH + H(+). Its function is as follows. Probably catalyzes the NADPH-dependent reduction of acrylyl-CoA to propanoyl-CoA. The protein is Probable acrylyl-CoA reductase AcuI (acuI) of Escherichia coli (strain K12).